Here is a 418-residue protein sequence, read N- to C-terminus: Sterigmatocystin 8-O-methyltransferase (418 aa).

Positions 1-41 (MALPSKAALVGLANTLSEQVKRYLATAGETKSPEDHKLCIE) are excised as a propeptide. 170-176 (MRSGASF) is a substrate binding site. Positions 206 to 225 (LFDYYSTVDEVRGRRFDLGM) are substrate binding. S-adenosyl-L-methionine contacts are provided by residues 254–255 (GG), D277, 297–298 (DI), and R313. The active-site Proton acceptor is the H317.

This sequence belongs to the class I-like SAM-binding methyltransferase superfamily. Cation-independent O-methyltransferase family. COMT subfamily.

It is found in the cytoplasm. Its subcellular location is the vacuole. The catalysed reaction is sterigmatocystin + S-adenosyl-L-methionine = 8-O-methylsterigmatocystin + S-adenosyl-L-homocysteine + H(+). The enzyme catalyses dihydrosterigmatocystin + S-adenosyl-L-methionine = 8-O-methyldihydrosterigmatocystin + S-adenosyl-L-homocysteine + H(+). Its pathway is mycotoxin biosynthesis; aflatoxin biosynthesis. Functionally, sterigmatocystin 8-O-methyltransferase; part of the gene cluster that mediates the biosynthesis of aflatoxins, a group of polyketide-derived furanocoumarins, and part of the most toxic and carcinogenic compounds among the known mycotoxins. The four major aflatoxins produced by A.parasiticus are aflatoxin B1 (AFB1), aflatoxin B2 (AFB2), aflatoxin G1 (AFG1) and aflatoxin G2 (AFG2). Within the aflatoxin pathway, the O-methyltransferase aflP uses both sterigmatocystin (ST) and dihydrosterigmatocystin (DHST) as substrates to yield O-methylsterigmatocystin (OMST) and dihydro-O-methylsterigmatocystin (DHOMST), respectively. The biosynthesis of aflatoxins begins with the norsolorinic acid synthase aflC that combines a hexanoyl starter unit produced by the fatty acid synthase aflA/aflB and 7 malonyl-CoA extender units to synthesize the precursor NOR. The second step is the conversion of NOR to averantin and requires the norsolorinic acid ketoreductase aflD, which catalyzes the dehydration of norsolorinic acid to form (1'S)-averantin. The norsolorinic acid reductases aflE and aflF may also play a role in the conversion of NOR to AVN. The cytochrome P450 monooxygenase aflG then catalyzes the hydroxylation of AVN to 5'hydroxyaverantin (HAVN). The next step is performed by the 5'-hydroxyaverantin dehydrogenase aflH that transforms HAVN to 5'-oxoaverantin (OAVN) which is further converted to averufin (AVF) by aflK that plays a dual role in the pathway, as a 5'-oxoaverantin cyclase that mediates conversion of 5'-oxoaverantin, as well as a versicolorin B synthase in a later step in the pathway. The averufin oxidase aflI catalyzes the conversion of AVF to versiconal hemiacetal acetate (VHA). VHA is then the substrate for the versiconal hemiacetal acetate esterase aflJ to yield versiconal (VAL). Versicolorin B synthase aflK then converts VAL to versicolorin B (VERB) by closing the bisfuran ring of aflatoxin which is required for DNA-binding, thus giving to aflatoxin its activity as a mutagen. Then, the activity of the versicolorin B desaturase aflL leads to versicolorin A (VERA). A branch point starts from VERB since it can also be converted to dihydrodemethylsterigmatocystin (DMDHST), probably also by aflL, VERA being a precursor for aflatoxins B1 and G1, and DMDHST for aflatoxins B2 and G2. Next, the versicolorin reductase aflM and the cytochrome P450 monooxygenase aflN are involved in conversion of VERA to demethylsterigmatocystin (DMST). AflX and aflY seem also involved in this step, through probable aflX-mediated epoxide ring-opening step following versicolorin A oxidation and aflY-mediated Baeyer-Villiger oxidation required for the formation of the xanthone ring. The methyltransferase aflO then leads to the modification of DMST to sterigmatocystin (ST), and of DMDHST to dihydrosterigmatocystin (DHST). Both ST and DHST are then substrates of the O-methyltransferase aflP to yield O-methylsterigmatocystin (OMST) and dihydro-O-methylsterigmatocystin (DHOMST), respectively. Finally OMST is converted to aflatoxins B1 and G1, and DHOMST to aflatoxins B2 and G2, via the action of several enzymes including O-methylsterigmatocystin oxidoreductase aflQ, the cytochrome P450 monooxygenase aflU, but also the NADH-dependent flavin oxidoreductase nadA which is specifically required for the synthesis of AFG1. The sequence is that of Sterigmatocystin 8-O-methyltransferase from Aspergillus parasiticus (strain ATCC 56775 / NRRL 5862 / SRRC 143 / SU-1).